Here is a 464-residue protein sequence, read N- to C-terminus: tRNA-2-methylthio-N(6)-dimethylallyladenosine synthase (464 aa).

Residues 19–135 enclose the MTTase N-terminal domain; that stretch reads GSYWITTFGC…LENLLGKVDL (117 aa). Cys-28, Cys-64, Cys-98, Cys-170, Cys-174, and Cys-177 together coordinate [4Fe-4S] cluster. The region spanning 156 to 394 is the Radical SAM core domain; sequence RESSICGWVN…DLVEKTARSR (239 aa). One can recognise a TRAM domain in the interval 396 to 464; the sequence is QRYIDNIESV…PFSLTGELSL (69 aa).

The protein belongs to the methylthiotransferase family. MiaB subfamily. As to quaternary structure, monomer. The cofactor is [4Fe-4S] cluster.

Its subcellular location is the cytoplasm. It catalyses the reaction N(6)-dimethylallyladenosine(37) in tRNA + (sulfur carrier)-SH + AH2 + 2 S-adenosyl-L-methionine = 2-methylsulfanyl-N(6)-dimethylallyladenosine(37) in tRNA + (sulfur carrier)-H + 5'-deoxyadenosine + L-methionine + A + S-adenosyl-L-homocysteine + 2 H(+). Catalyzes the methylthiolation of N6-(dimethylallyl)adenosine (i(6)A), leading to the formation of 2-methylthio-N6-(dimethylallyl)adenosine (ms(2)i(6)A) at position 37 in tRNAs that read codons beginning with uridine. This chain is tRNA-2-methylthio-N(6)-dimethylallyladenosine synthase, found in Prochlorococcus marinus (strain MIT 9301).